Consider the following 475-residue polypeptide: Probable proline--tRNA ligase, mitochondrial (475 aa).

Residues 1 to 29 (MEGLLTRCRTLSALATCSLRHSRCIVRKC) constitute a mitochondrion transit peptide.

It belongs to the class-II aminoacyl-tRNA synthetase family.

The protein localises to the mitochondrion matrix. It carries out the reaction tRNA(Pro) + L-proline + ATP = L-prolyl-tRNA(Pro) + AMP + diphosphate. In terms of biological role, mitochondrial aminoacyl-tRNA synthetase that catalyzes the specific attachment of the proline amino acid (aa) to the homologous transfer RNA (tRNA), further participating in protein synthesis. The reaction occurs in a two steps: proline is first activated by ATP to form Pro-AMP and then transferred to the acceptor end of tRNA(Pro). This chain is Probable proline--tRNA ligase, mitochondrial (Pars2), found in Rattus norvegicus (Rat).